The primary structure comprises 1830 residues: Dedicator of cytokinesis protein 2 (1830 aa).

An SH3 domain is found at 8-69; it reads DKERHGVAIY…PKSFIHIKEV (62 aa). K304 is subject to N6-acetyllysine. Residues 423-607 form the C2 DOCK-type domain; it reads RNDIYITLLQ…DVFSISTLVC (185 aa). Residues S588 and S593 each carry the phosphoserine modification. K738 carries the post-translational modification N6-acetyllysine. An interaction with CRKL region spans residues 939–1476; sequence CMTAILNQMG…TSFVTAYKLP (538 aa). The DOCKER domain maps to 1211–1622; sequence YKDNNREEMY…VEKEYGVREM (412 aa). Residues 1651–1665 are compositionally biased toward polar residues; the sequence is MNSDCSTPSKPTSES. The segment at 1651–1704 is disordered; sequence MNSDCSTPSKPTSESFDLELASPKTPRVEQEEPISPGSTLPEVKLRRSKKRTKR. Phosphoserine is present on residues S1685, S1706, S1731, and S1784.

This sequence belongs to the DOCK family. As to quaternary structure, homodimer. Interacts with RAC1 and RAC2. Interacts with CRKL and VAV. Interacts with CD3Z. As to expression, specifically expressed in hematopoietic cells. Highly expressed in peripheral blood leukocytes, and expressed at intermediate level in thymus and spleen. Expressed at very low level in the small intestine and colon.

Its subcellular location is the endomembrane system. The protein resides in the cytoplasm. The protein localises to the cytoskeleton. In terms of biological role, involved in cytoskeletal rearrangements required for lymphocyte migration in response of chemokines. Activates RAC1 and RAC2, but not CDC42, by functioning as a guanine nucleotide exchange factor (GEF), which exchanges bound GDP for free GTP. May also participate in IL2 transcriptional activation via the activation of RAC2. This chain is Dedicator of cytokinesis protein 2 (DOCK2), found in Homo sapiens (Human).